Here is a 254-residue protein sequence, read N- to C-terminus: Glutamate racemase (254 aa).

Residues 7–8 (DS) and 39–40 (YG) each bind substrate. Catalysis depends on Cys70, which acts as the Proton donor/acceptor. Substrate contacts are provided by residues 71–72 (NT) and Glu147. Cys178 acts as the Proton donor/acceptor in catalysis. Position 179-180 (179-180 (TH)) interacts with substrate.

This sequence belongs to the aspartate/glutamate racemases family. As to quaternary structure, homodimer.

It carries out the reaction L-glutamate = D-glutamate. It participates in cell wall biogenesis; peptidoglycan biosynthesis. Provides the (R)-glutamate required for cell wall biosynthesis. Converts L- or D-glutamate to D- or L-glutamate, respectively, but not other amino acids such as alanine, aspartate, and glutamine. This is Glutamate racemase from Aquifex pyrophilus.